The chain runs to 861 residues: Bifunctional uridylyltransferase/uridylyl-removing enzyme (861 aa).

The interval 1-321 is uridylyltransferase; the sequence is MKNDNRIIKN…VYHQKQKIIR (321 aa). A uridylyl-removing region spans residues 322–678; sequence LDDEFQLSNR…IMPHHSQGGT (357 aa). Residues 440 to 562 form the HD domain; that stretch reads VDQHTLFVIR…LPHARYLDYL (123 aa). ACT domains are found at residues 679-760 and 788-861; these read EVFI…AVSR and QLFL…KSKY.

The protein belongs to the GlnD family. Requires Mg(2+) as cofactor.

The catalysed reaction is [protein-PII]-L-tyrosine + UTP = [protein-PII]-uridylyl-L-tyrosine + diphosphate. The enzyme catalyses [protein-PII]-uridylyl-L-tyrosine + H2O = [protein-PII]-L-tyrosine + UMP + H(+). Uridylyltransferase (UTase) activity is inhibited by glutamine, while glutamine activates uridylyl-removing (UR) activity. Functionally, modifies, by uridylylation and deuridylylation, the PII regulatory proteins (GlnB and homologs), in response to the nitrogen status of the cell that GlnD senses through the glutamine level. Under low glutamine levels, catalyzes the conversion of the PII proteins and UTP to PII-UMP and PPi, while under higher glutamine levels, GlnD hydrolyzes PII-UMP to PII and UMP (deuridylylation). Thus, controls uridylylation state and activity of the PII proteins, and plays an important role in the regulation of nitrogen assimilation and metabolism. The chain is Bifunctional uridylyltransferase/uridylyl-removing enzyme from Legionella pneumophila (strain Paris).